The chain runs to 340 residues: MKALVKREANKGIWLEQVPVPTPGPNEVLIKLEKTAICGTDLHIYLWDEWSQRTIEPGLTIGHEFVGRVAELGSAVTGYQIGQRVSAEGHIVCGHCRNCRGGRPHLCPNTVGIGVNVNGAFAEYMVMPASNLWPIPDQIPSELAAFFDPYGNAAHCALEFDVIGEDVLITGAGPIGIIAAGICKHIGARNVVVTDVNDFRLKLAADMGATRVVNVSKTSLKDVMADLHMEGFDVGLEMSGNSRAFNDMLDCMYHGGKIAMLGIMPRGAGCDWDKIIFKGLTVQGIYGRKMYETWYKMTQLVLSGFPLHKVLTHQLPIDDFQKGFDLMEEGKAGKVVLSWN.

Cysteine 38 lines the Zn(2+) pocket. Residues threonine 40 and histidine 43 each act as charge relay system in the active site. Residues histidine 63, glutamate 64, cysteine 93, cysteine 96, cysteine 99, and cysteine 107 each contribute to the Zn(2+) site. Residues isoleucine 175, aspartate 195, arginine 200, 261–263, and 285–286 contribute to the NAD(+) site; these read LGI and IY.

The protein belongs to the zinc-containing alcohol dehydrogenase family. In terms of assembly, homotetramer. The cofactor is Zn(2+).

It localises to the cytoplasm. The catalysed reaction is L-threonine + NAD(+) = (2S)-2-amino-3-oxobutanoate + NADH + H(+). The protein operates within amino-acid degradation; L-threonine degradation via oxydo-reductase pathway; glycine from L-threonine: step 1/2. Catalyzes the NAD(+)-dependent oxidation of L-threonine to 2-amino-3-ketobutyrate. This is L-threonine 3-dehydrogenase from Xanthomonas axonopodis pv. citri (strain 306).